Reading from the N-terminus, the 778-residue chain is Serine/threonine-protein kinase BRSK1 (778 aa).

Positions 1-12 (MSSGAKEGGGGS) are enriched in gly residues. The segment at 1–29 (MSSGAKEGGGGSPAYHLPHPHPHPPQHAQ) is disordered. Residues 34 to 285 (YRLEKTLGKG…LEQIQKHPWY (252 aa)) form the Protein kinase domain. Residues 40–48 (LGKGQTGLV) and lysine 63 contribute to the ATP site. Catalysis depends on aspartate 156, which acts as the Proton acceptor. Residue threonine 189 is modified to Phosphothreonine; by LKB1. The 43-residue stretch at 314-356 (ELDPDVLESMASLGCFRDRERLHRELRSEEENQEKMIYYLLLD) folds into the UBA domain. Over residues 362 to 383 (PSCEDQDLPPRNDVDPPRKRVD) the composition is skewed to basic and acidic residues. The interval 362–548 (PSCEDQDLPP…SPGGGVGGAA (187 aa)) is disordered. Phosphoserine is present on residues serine 399, serine 443, serine 447, and serine 450. A compositionally biased stretch (low complexity) spans 430–457 (SRSVSGASTGLSSSPLSSPRSPVFSFSP). 4 positions are modified to omega-N-methylarginine: arginine 466, arginine 481, arginine 484, and arginine 498. A compositionally biased stretch (pro residues) spans 491-508 (QPPPPSARSTPLPGPPGS). Serine 508 is subject to Phosphoserine. The span at 509 to 533 (PRSSGGTPLHSPLHTPRASPTGTPG) shows a compositional bias: low complexity. Position 525 is an omega-N-methylarginine (arginine 525). Residues threonine 529 and threonine 535 each carry the phosphothreonine modification. Arginine 550 is modified (omega-N-methylarginine). Residue threonine 583 is modified to Phosphothreonine. Residues serine 586, serine 587, and serine 601 each carry the phosphoserine modification. Positions 719–778 (QPSVQALADEKNGAQTRPAGAPPRSLQPPPGRPDPELSSSPRRGPPKDKKLLATNGTPLP) are disordered.

This sequence belongs to the protein kinase superfamily. CAMK Ser/Thr protein kinase family. SNF1 subfamily. Mg(2+) is required as a cofactor. In terms of processing, phosphorylated at Thr-189 by STK11/LKB1 in complex with STE20-related adapter-alpha (STRADA) pseudo kinase and CAB39. Not phosphorylated at Thr-189 by CaMKK2. In contrast, it is phosphorylated and activated by CaMKK1. May be inactivated via dephosphorylation of Thr-189 by PP2C. Widely expressed, with highest levels in brain and testis. Protein levels remain constant throughout the cell cycle.

It localises to the cytoplasm. It is found in the nucleus. The protein resides in the cytoskeleton. Its subcellular location is the microtubule organizing center. The protein localises to the centrosome. It localises to the synapse. It is found in the presynaptic active zone. The protein resides in the cytoplasmic vesicle. Its subcellular location is the secretory vesicle. The protein localises to the synaptic vesicle. The enzyme catalyses L-seryl-[protein] + ATP = O-phospho-L-seryl-[protein] + ADP + H(+). It carries out the reaction L-threonyl-[protein] + ATP = O-phospho-L-threonyl-[protein] + ADP + H(+). The catalysed reaction is L-seryl-[tau protein] + ATP = O-phospho-L-seryl-[tau protein] + ADP + H(+). It catalyses the reaction L-threonyl-[tau protein] + ATP = O-phospho-L-threonyl-[tau protein] + ADP + H(+). Activated by phosphorylation on Thr-189 by STK11/LKB1. In terms of biological role, serine/threonine-protein kinase that plays a key role in polarization of neurons and centrosome duplication. Phosphorylates CDC25B, CDC25C, MAPT/TAU, RIMS1, TUBG1, TUBG2 and WEE1. Following phosphorylation and activation by STK11/LKB1, acts as a key regulator of polarization of cortical neurons, probably by mediating phosphorylation of microtubule-associated proteins such as MAPT/TAU at 'Thr-529' and 'Ser-579'. Also regulates neuron polarization by mediating phosphorylation of WEE1 at 'Ser-642' in postmitotic neurons, leading to down-regulate WEE1 activity in polarized neurons. In neurons, localizes to synaptic vesicles and plays a role in neurotransmitter release, possibly by phosphorylating RIMS1. Also acts as a positive regulator of centrosome duplication by mediating phosphorylation of gamma-tubulin (TUBG1 and TUBG2) at 'Ser-131', leading to translocation of gamma-tubulin and its associated proteins to the centrosome. Involved in the UV-induced DNA damage checkpoint response, probably by inhibiting CDK1 activity through phosphorylation and activation of WEE1, and inhibition of CDC25B and CDC25C. The polypeptide is Serine/threonine-protein kinase BRSK1 (BRSK1) (Homo sapiens (Human)).